The chain runs to 489 residues: Phosphoenolpyruvate carboxykinase (ATP) (489 aa).

Residues arginine 53 and tyrosine 159 each coordinate substrate. Residues histidine 185, 208–216 (GLSGTGKTT), aspartate 258, arginine 300, 409–410 (KI), and serine 415 each bind ATP. Arginine 300 lines the substrate pocket.

It belongs to the phosphoenolpyruvate carboxykinase (ATP) family.

The protein resides in the cytoplasm. The enzyme catalyses oxaloacetate + ATP = phosphoenolpyruvate + ADP + CO2. The protein operates within carbohydrate biosynthesis; gluconeogenesis. Its function is as follows. Involved in the gluconeogenesis. Catalyzes the conversion of oxaloacetate (OAA) to phosphoenolpyruvate (PEP) through direct phosphoryl transfer between the nucleoside triphosphate and OAA. The protein is Phosphoenolpyruvate carboxykinase (ATP) of Aeropyrum pernix (strain ATCC 700893 / DSM 11879 / JCM 9820 / NBRC 100138 / K1).